Consider the following 153-residue polypeptide: Endoribonuclease YbeY (153 aa).

The Zn(2+) site is built by His118, His122, and His128.

Belongs to the endoribonuclease YbeY family. Requires Zn(2+) as cofactor.

Its subcellular location is the cytoplasm. Its function is as follows. Single strand-specific metallo-endoribonuclease involved in late-stage 70S ribosome quality control and in maturation of the 3' terminus of the 16S rRNA. In Chloroflexus aggregans (strain MD-66 / DSM 9485), this protein is Endoribonuclease YbeY.